Here is a 378-residue protein sequence, read N- to C-terminus: Secreted LysM effector ldpA (378 aa).

Positions 1–19 are cleaved as a signal peptide; that stretch reads MMKSIRFLASALALCLVDA. Residues 118 to 131 are compositionally biased toward low complexity; the sequence is WTPPTTTTRSTSSS. A disordered region spans residues 118-139; that stretch reads WTPPTTTTRSTSSSAGNGVTTP. The 47-residue stretch at 152–198 folds into the LysM 1 domain; it reads RFYLVVSGDSCYDIAAAQGISLDNFYTWNPAVGSSCGGLWPDYYVCV. Residues 208 to 230 form a disordered region; that stretch reads TTTTTTTPTTTSTTTTTAGNGVT. LysM domains follow at residues 245–291 and 330–376; these read KFYQ…YVCV and KFYL…YVCV.

This sequence belongs to the secreted LysM effector family.

It is found in the secreted. The protein localises to the cell wall. It localises to the extracellular space. The protein resides in the extracellular matrix. Functionally, cell wall chitin of A.fumigatus recruits lung eosinophils during infection and ldpA might have a role in sequestration of chitin and act as triggers of host immunity to dampen host defense. The protein is Secreted LysM effector ldpA of Aspergillus fumigatus (strain ATCC MYA-4609 / CBS 101355 / FGSC A1100 / Af293) (Neosartorya fumigata).